The primary structure comprises 184 residues: Phosducin-like protein 3 (184 aa).

The interval 45 to 184 (HGELKEIDEQ…VKNNKFKEDD (140 aa)) is thioredoxin fold.

The protein belongs to the phosducin family.

The polypeptide is Phosducin-like protein 3 (phlp3) (Dictyostelium discoideum (Social amoeba)).